The sequence spans 35 residues: Flavodoxin (35 aa).

The Flavodoxin-like domain occupies 4-35 (IGLFYGTZTGKTESVAEIIDEFGDEVVTLDID).

Belongs to the flavodoxin family. FMN serves as cofactor.

In terms of biological role, low-potential electron donor to a number of redox enzymes. This Nostoc sp. (strain MAC) protein is Flavodoxin.